The chain runs to 529 residues: Bifunctional purine biosynthesis protein PurH (529 aa).

The region spanning 3–149 (DRIPLKRALI…KNHAFVTVVV (147 aa)) is the MGS-like domain.

The protein belongs to the PurH family.

The enzyme catalyses (6R)-10-formyltetrahydrofolate + 5-amino-1-(5-phospho-beta-D-ribosyl)imidazole-4-carboxamide = 5-formamido-1-(5-phospho-D-ribosyl)imidazole-4-carboxamide + (6S)-5,6,7,8-tetrahydrofolate. It carries out the reaction IMP + H2O = 5-formamido-1-(5-phospho-D-ribosyl)imidazole-4-carboxamide. It functions in the pathway purine metabolism; IMP biosynthesis via de novo pathway; 5-formamido-1-(5-phospho-D-ribosyl)imidazole-4-carboxamide from 5-amino-1-(5-phospho-D-ribosyl)imidazole-4-carboxamide (10-formyl THF route): step 1/1. Its pathway is purine metabolism; IMP biosynthesis via de novo pathway; IMP from 5-formamido-1-(5-phospho-D-ribosyl)imidazole-4-carboxamide: step 1/1. In Paracoccus denitrificans (strain Pd 1222), this protein is Bifunctional purine biosynthesis protein PurH.